Consider the following 122-residue polypeptide: MIQVETRLNVADNSGAKLVECIKVIGGSKRRYAGIGDIIVVAVKEALPTSVIKKGTVEKAVIVRVSKEYRRPDGTYIRFDDNACVIVDDNKNPKGKRIFGPVARELRDHDFMKIVSLAPEVL.

The protein belongs to the universal ribosomal protein uL14 family. In terms of assembly, part of the 50S ribosomal subunit. Forms a cluster with proteins L3 and L19. In the 70S ribosome, L14 and L19 interact and together make contacts with the 16S rRNA in bridges B5 and B8.

In terms of biological role, binds to 23S rRNA. Forms part of two intersubunit bridges in the 70S ribosome. This Treponema denticola (strain ATCC 35405 / DSM 14222 / CIP 103919 / JCM 8153 / KCTC 15104) protein is Large ribosomal subunit protein uL14.